A 106-amino-acid chain; its full sequence is ATP-dependent Clp protease adapter protein ClpS (106 aa).

Belongs to the ClpS family. In terms of assembly, binds to the N-terminal domain of the chaperone ClpA.

Involved in the modulation of the specificity of the ClpAP-mediated ATP-dependent protein degradation. This Pseudoalteromonas atlantica (strain T6c / ATCC BAA-1087) protein is ATP-dependent Clp protease adapter protein ClpS.